The chain runs to 62 residues: Photosystem II reaction center protein Z (62 aa).

The next 2 helical transmembrane spans lie at 8-28 (SVFA…VALA) and 41-61 (FSGV…NSFI).

The protein belongs to the PsbZ family. As to quaternary structure, PSII is composed of 1 copy each of membrane proteins PsbA, PsbB, PsbC, PsbD, PsbE, PsbF, PsbH, PsbI, PsbJ, PsbK, PsbL, PsbM, PsbT, PsbY, PsbZ, Psb30/Ycf12, at least 3 peripheral proteins of the oxygen-evolving complex and a large number of cofactors. It forms dimeric complexes.

The protein resides in the plastid. It is found in the chloroplast thylakoid membrane. May control the interaction of photosystem II (PSII) cores with the light-harvesting antenna, regulates electron flow through the 2 photosystem reaction centers. PSII is a light-driven water plastoquinone oxidoreductase, using light energy to abstract electrons from H(2)O, generating a proton gradient subsequently used for ATP formation. This is Photosystem II reaction center protein Z from Cryptomeria japonica (Japanese cedar).